Reading from the N-terminus, the 840-residue chain is Protein translocase subunit SecA (840 aa).

ATP contacts are provided by residues Gln87, 105-109, and Asp494; that span reads GEGKT. Residues 518-537 are disordered; it reads RRIDNQLRGRSGRQGDPGSS. The Zn(2+) site is built by Cys826, Cys828, Cys837, and Cys838.

Belongs to the SecA family. In terms of assembly, monomer and homodimer. Part of the essential Sec protein translocation apparatus which comprises SecA, SecYEG and auxiliary proteins SecDF-YajC and YidC. It depends on Zn(2+) as a cofactor.

It localises to the cell inner membrane. The protein localises to the cytoplasm. It catalyses the reaction ATP + H2O + cellular proteinSide 1 = ADP + phosphate + cellular proteinSide 2.. Its function is as follows. Part of the Sec protein translocase complex. Interacts with the SecYEG preprotein conducting channel. Has a central role in coupling the hydrolysis of ATP to the transfer of proteins into and across the cell membrane, serving as an ATP-driven molecular motor driving the stepwise translocation of polypeptide chains across the membrane. The sequence is that of Protein translocase subunit SecA from Desulforapulum autotrophicum (strain ATCC 43914 / DSM 3382 / VKM B-1955 / HRM2) (Desulfobacterium autotrophicum).